The primary structure comprises 349 residues: Isopentenyl-diphosphate delta-isomerase (349 aa).

6 to 7 (RK) provides a ligand contact to substrate. Residues 62 to 64 (AMT), Ser-93, and Asn-122 contribute to the FMN site. Residue Gln-152 participates in substrate binding. Glu-153 serves as a coordination point for Mg(2+). FMN contacts are provided by residues Lys-184, Thr-214, 258–259 (GG), and 280–281 (AG).

This sequence belongs to the IPP isomerase type 2 family. As to quaternary structure, homooctamer. Dimer of tetramers. Requires FMN as cofactor. The cofactor is NADPH. It depends on Mg(2+) as a cofactor.

The protein resides in the cytoplasm. It catalyses the reaction isopentenyl diphosphate = dimethylallyl diphosphate. Involved in the biosynthesis of isoprenoids. Catalyzes the 1,3-allylic rearrangement of the homoallylic substrate isopentenyl (IPP) to its allylic isomer, dimethylallyl diphosphate (DMAPP). The protein is Isopentenyl-diphosphate delta-isomerase of Bacillus thuringiensis subsp. konkukian (strain 97-27).